Reading from the N-terminus, the 612-residue chain is Beta-mannosyltransferase 5 (612 aa).

At 1 to 12 the chain is on the cytoplasmic side; it reads MVQKQYRFAPKS. Residues 13–33 form a helical membrane-spanning segment; sequence IFTFVFLCFVAIVVIISTSSL. The Extracellular segment spans residues 34-612; the sequence is VQVEESLDPI…YRAHLKRWQN (579 aa). Asn224, Asn230, and Asn480 each carry an N-linked (GlcNAc...) asparagine glycan.

This sequence belongs to the BMT family.

It localises to the membrane. Functionally, beta-mannosyltransferase involved in cell wall biosynthesis. Required for beta-1,2-mannose transfer on phospholipomannan. In Candida albicans (strain SC5314 / ATCC MYA-2876) (Yeast), this protein is Beta-mannosyltransferase 5 (BMT5).